The primary structure comprises 1072 residues: Dyslexia-associated protein KIAA0319 (1072 aa).

The first 20 residues, 1–20 (MAPPTGVLSSLLLLVTIAGC), serve as a signal peptide directing secretion. The 79-residue stretch at 21-99 (ARKQCSEGRT…PKKMGPIRSY (79 aa)) folds into the MANSC domain. The Extracellular portion of the chain corresponds to 21 to 955 (ARKQCSEGRT…WDGESNCEWS (935 aa)). Disordered stretches follow at residues 168–277 (LQPS…SLPP) and 295–327 (VTPGSTEHSIPTPPTSAAPSESTPSELPISPTT). N-linked (GlcNAc...) asparagine glycosylation is found at Asn196, Asn219, and Asn262. A compositionally biased stretch (polar residues) spans 254 to 265 (SQLQEQSSNSSG). The segment covering 311 to 320 (AAPSESTPSE) has biased composition (low complexity). 5 consecutive PKD domains span residues 341 to 427 (DNLI…VKPA), 435 to 524 (VAVV…VNNA), 530 to 620 (VANA…VQPE), 621 to 714 (NNRP…VKKE), and 720 to 811 (RARA…VQPD). N-linked (GlcNAc...) asparagine glycans are attached at residues Asn394, Asn421, Asn498, Asn513, Asn536, and Asn551. Asn733 carries N-linked (GlcNAc...) asparagine glycosylation. Residues 956-976 (IFYVTVLAFTLIVLTGGFTWL) traverse the membrane as a helical segment. Over 977–1072 (CICCCKRQKR…ASFSYCSKDR (96 aa)) the chain is Cytoplasmic. An Endocytosis signal motif is present at residues 995–998 (YTIL). Residues 1045-1072 (KMERGNPKVSMNGSIRNGASFSYCSKDR) form a disordered region. Residues 1053-1072 (VSMNGSIRNGASFSYCSKDR) are compositionally biased toward polar residues.

In terms of assembly, homodimer. Interacts with AP2M1; required for clathrin-mediated endocytosis. In terms of processing, N-glycosylated. Post-translationally, O-glycosylated. Shedding of the extracellular domain and intramembrane cleavage produce several proteolytic products. The intramembrane cleavage releases a soluble cytoplasmic polypeptide that translocates to the nucleolus. As to expression, detected in adult brain cortex and fetal frontal lobe (at protein level). Highly expressed in brain cortex, putamen, amygdala, hippocampus and cerebellum.

Its subcellular location is the cell membrane. It is found in the early endosome membrane. Involved in neuronal migration during development of the cerebral neocortex. May function in a cell autonomous and a non-cell autonomous manner and play a role in appropriate adhesion between migrating neurons and radial glial fibers. May also regulate growth and differentiation of dendrites. The sequence is that of Dyslexia-associated protein KIAA0319 (KIAA0319) from Homo sapiens (Human).